Consider the following 336-residue polypeptide: Tryptophan--tRNA ligase 1 (336 aa).

ATP contacts are provided by residues 9–11 and 17–18; these read KPT and GN. The short motif at 10–18 is the 'HIGH' region element; that stretch reads PTGHLTLGN. Aspartate 137 serves as a coordination point for L-tryptophan. ATP contacts are provided by residues 149–151, valine 188, and 197–201; these read GED and KMGKS. The short motif at 197 to 201 is the 'KMSKS' region element; the sequence is KMGKS.

Belongs to the class-I aminoacyl-tRNA synthetase family. Homodimer.

It is found in the cytoplasm. It carries out the reaction tRNA(Trp) + L-tryptophan + ATP = L-tryptophyl-tRNA(Trp) + AMP + diphosphate + H(+). Its function is as follows. Catalyzes the attachment of tryptophan to tRNA(Trp). In Streptomyces coelicolor (strain ATCC BAA-471 / A3(2) / M145), this protein is Tryptophan--tRNA ligase 1.